A 404-amino-acid chain; its full sequence is Glucose-1-phosphate adenylyltransferase (404 aa).

Alpha-D-glucose 1-phosphate is bound by residues tyrosine 99, glycine 164, 179–180 (EK), and serine 197.

This sequence belongs to the bacterial/plant glucose-1-phosphate adenylyltransferase family.

The catalysed reaction is alpha-D-glucose 1-phosphate + ATP + H(+) = ADP-alpha-D-glucose + diphosphate. The protein operates within glycan biosynthesis; glycogen biosynthesis. Involved in the biosynthesis of ADP-glucose building block, required in the biosynthesis of maltose-1-phosphate (M1P) and in the elongation reactions to produce linear alpha-1,4-glucans. Catalyzes the reaction between ATP and alpha-D-glucose 1-phosphate (G1P) to produce pyrophosphate and ADP-Glc. In Mycolicibacterium smegmatis (strain ATCC 700084 / mc(2)155) (Mycobacterium smegmatis), this protein is Glucose-1-phosphate adenylyltransferase.